The following is a 418-amino-acid chain: UDP-N-acetylglucosamine 1-carboxyvinyltransferase (418 aa).

22–23 provides a ligand contact to phosphoenolpyruvate; it reads KN. UDP-N-acetyl-alpha-D-glucosamine is bound at residue Arg-92. Cys-116 serves as the catalytic Proton donor. Cys-116 bears the 2-(S-cysteinyl)pyruvic acid O-phosphothioketal mark. UDP-N-acetyl-alpha-D-glucosamine is bound by residues 121 to 125, Asp-305, and Leu-327; that span reads RPIDL.

Belongs to the EPSP synthase family. MurA subfamily.

It localises to the cytoplasm. The catalysed reaction is phosphoenolpyruvate + UDP-N-acetyl-alpha-D-glucosamine = UDP-N-acetyl-3-O-(1-carboxyvinyl)-alpha-D-glucosamine + phosphate. It functions in the pathway cell wall biogenesis; peptidoglycan biosynthesis. In terms of biological role, cell wall formation. Adds enolpyruvyl to UDP-N-acetylglucosamine. This Campylobacter jejuni subsp. doylei (strain ATCC BAA-1458 / RM4099 / 269.97) protein is UDP-N-acetylglucosamine 1-carboxyvinyltransferase.